Here is a 210-residue protein sequence, read N- to C-terminus: Probable septum site-determining protein MinC (210 aa).

It belongs to the MinC family. In terms of assembly, interacts with MinD and FtsZ.

In terms of biological role, cell division inhibitor that blocks the formation of polar Z ring septums. Rapidly oscillates between the poles of the cell to destabilize FtsZ filaments that have formed before they mature into polar Z rings. Prevents FtsZ polymerization. The sequence is that of Probable septum site-determining protein MinC from Clostridium novyi (strain NT).